The following is a 513-amino-acid chain: L-arabinose transport ATP-binding protein AraG (513 aa).

ABC transporter domains follow at residues 6–243 (LEMR…GMVG) and 264–508 (VKNW…TKTA). 38-45 (GENGAGKS) contacts ATP.

This sequence belongs to the ABC transporter superfamily.

The protein localises to the cell membrane. It carries out the reaction L-arabinose(out) + ATP + H2O = L-arabinose(in) + ADP + phosphate + H(+). Its function is as follows. Part of the binding-protein-dependent transport system for L-arabinose. Probably responsible for energy coupling to the transport system. The polypeptide is L-arabinose transport ATP-binding protein AraG (araG) (Geobacillus stearothermophilus (Bacillus stearothermophilus)).